The following is a 598-amino-acid chain: Membrane protein insertase YidC (598 aa).

The helical transmembrane segment at 7 to 27 (NYFIAIALSVLIVLGWQFLYM) threads the bilayer. The interval 37-71 (AQEAQKAQQQTEQVQQPAAGGATPAPASGTAPSGQ) is disordered. Residues 40–71 (AQKAQQQTEQVQQPAAGGATPAPASGTAPSGQ) are compositionally biased toward low complexity. 4 helical membrane passes run 373–393 (FFGNFGVAILCTTIVVKALFF), 447–467 (WPVALQIPIFFSLYKVIYITI), 492–512 (LFGLLPFTAPTFLHLGVWPLI), and 538–558 (WMPLVFMFMLASFPAGLVIYW).

This sequence belongs to the OXA1/ALB3/YidC family. Type 1 subfamily. As to quaternary structure, interacts with the Sec translocase complex via SecD. Specifically interacts with transmembrane segments of nascent integral membrane proteins during membrane integration.

It localises to the cell inner membrane. Its function is as follows. Required for the insertion and/or proper folding and/or complex formation of integral membrane proteins into the membrane. Involved in integration of membrane proteins that insert both dependently and independently of the Sec translocase complex, as well as at least some lipoproteins. Aids folding of multispanning membrane proteins. The chain is Membrane protein insertase YidC from Rhizobium etli (strain CIAT 652).